Here is a 226-residue protein sequence, read N- to C-terminus: Ornithine decarboxylase antizyme (226 aa).

The protein belongs to the ODC antizyme family. In terms of assembly, interacts with ODC and thereby sterically blocks ODC homodimerization.

In terms of biological role, ornithine decarboxylase (ODC) antizyme protein that negatively regulates ODC activity and intracellular polyamine biosynthesis in response to increased intracellular polyamine levels. Binds to ODC monomers, inhibiting the assembly of the functional ODC homodimer, and targets the monomers for ubiquitin-independent proteolytic destruction by the 26S proteasome. This chain is Ornithine decarboxylase antizyme (spa1), found in Schizosaccharomyces japonicus (Fission yeast).